The following is a 442-amino-acid chain: FBD-associated F-box protein At1g66310 (442 aa).

Residues 18–64 (VDWLRDLPESLLCHILLNLPTKDVVKTSVLSSKWRNLWRLVPGLDLD) form the F-box domain. An FBD domain is found at 363–415 (KRRTSVLSGPRRLLSSLEYVEIESPLTGEVFEMKLVSYLLENSPILKKLTINL).

The protein is FBD-associated F-box protein At1g66310 of Arabidopsis thaliana (Mouse-ear cress).